The following is a 251-amino-acid chain: Hydroxyacylglutathione hydrolase (251 aa).

Zn(2+) contacts are provided by H53, H55, D57, H58, H110, D127, and H165.

Belongs to the metallo-beta-lactamase superfamily. Glyoxalase II family. In terms of assembly, monomer. Zn(2+) is required as a cofactor.

The catalysed reaction is an S-(2-hydroxyacyl)glutathione + H2O = a 2-hydroxy carboxylate + glutathione + H(+). The protein operates within secondary metabolite metabolism; methylglyoxal degradation; (R)-lactate from methylglyoxal: step 2/2. Its function is as follows. Thiolesterase that catalyzes the hydrolysis of S-D-lactoyl-glutathione to form glutathione and D-lactic acid. The protein is Hydroxyacylglutathione hydrolase of Shigella dysenteriae serotype 1 (strain Sd197).